Reading from the N-terminus, the 394-residue chain is NAD(P)H-quinone oxidoreductase subunit H (394 aa).

The protein belongs to the complex I 49 kDa subunit family. In terms of assembly, NDH-1 can be composed of about 15 different subunits; different subcomplexes with different compositions have been identified which probably have different functions.

It is found in the cellular thylakoid membrane. The enzyme catalyses a plastoquinone + NADH + (n+1) H(+)(in) = a plastoquinol + NAD(+) + n H(+)(out). The catalysed reaction is a plastoquinone + NADPH + (n+1) H(+)(in) = a plastoquinol + NADP(+) + n H(+)(out). In terms of biological role, NDH-1 shuttles electrons from an unknown electron donor, via FMN and iron-sulfur (Fe-S) centers, to quinones in the respiratory and/or the photosynthetic chain. The immediate electron acceptor for the enzyme in this species is believed to be plastoquinone. Couples the redox reaction to proton translocation, and thus conserves the redox energy in a proton gradient. Cyanobacterial NDH-1 also plays a role in inorganic carbon-concentration. In Prochlorococcus marinus (strain SARG / CCMP1375 / SS120), this protein is NAD(P)H-quinone oxidoreductase subunit H.